A 235-amino-acid polypeptide reads, in one-letter code: Orotidine 5'-phosphate decarboxylase (235 aa).

Residues aspartate 10, lysine 32, 59-68 (DLKLHDIPNT), threonine 123, arginine 184, glutamine 193, glycine 213, and arginine 214 contribute to the substrate site. Lysine 61 (proton donor) is an active-site residue.

It belongs to the OMP decarboxylase family. Type 1 subfamily. Homodimer.

The enzyme catalyses orotidine 5'-phosphate + H(+) = UMP + CO2. It participates in pyrimidine metabolism; UMP biosynthesis via de novo pathway; UMP from orotate: step 2/2. Functionally, catalyzes the decarboxylation of orotidine 5'-monophosphate (OMP) to uridine 5'-monophosphate (UMP). This is Orotidine 5'-phosphate decarboxylase from Paramagnetospirillum magneticum (strain ATCC 700264 / AMB-1) (Magnetospirillum magneticum).